Consider the following 132-residue polypeptide: uncharacterized protein (132 aa).

Helical transmembrane passes span 15 to 37 (FPEY…LLLY), 49 to 71 (AFIP…LRLF), 81 to 103 (VILT…LALV), and 110 to 129 (LAAT…MAFV).

It localises to the cell membrane. This is an uncharacterized protein from Archaeoglobus fulgidus (strain ATCC 49558 / DSM 4304 / JCM 9628 / NBRC 100126 / VC-16).